The following is a 123-amino-acid chain: MARIGGVNVPVNKRVVVALTYIYGIGPSLASKICEGCGIGEDVLVSSLSDEDVVKIRNFIRSGCVVEADLRKEVAMNIKFLMDIGCYRGLRHRKKLPVRGQRTHTNARTRKGGTRLAVAVKKG.

It belongs to the universal ribosomal protein uS13 family. In terms of assembly, part of the 30S ribosomal subunit. Forms a loose heterodimer with protein S19. Forms two bridges to the 50S subunit in the 70S ribosome.

Functionally, located at the top of the head of the 30S subunit, it contacts several helices of the 16S rRNA. In the 70S ribosome it contacts the 23S rRNA (bridge B1a) and protein L5 of the 50S subunit (bridge B1b), connecting the 2 subunits; these bridges are implicated in subunit movement. Contacts the tRNAs in the A and P-sites. In Anaplasma marginale (strain St. Maries), this protein is Small ribosomal subunit protein uS13.